The sequence spans 400 residues: Enoyl-[acyl-carrier-protein] reductase [NADH] (400 aa).

NAD(+) is bound by residues 48–53, 74–75, 111–112, and 139–140; these read GSSSGY, FE, DA, and LA. Position 225 (Tyr225) interacts with substrate. Tyr235 serves as the catalytic Proton donor. NAD(+)-binding positions include Lys244 and 273–275; that span reads VVT.

It belongs to the TER reductase family. Monomer.

It carries out the reaction a 2,3-saturated acyl-[ACP] + NAD(+) = a (2E)-enoyl-[ACP] + NADH + H(+). Its pathway is lipid metabolism; fatty acid biosynthesis. Its function is as follows. Involved in the final reduction of the elongation cycle of fatty acid synthesis (FAS II). Catalyzes the reduction of a carbon-carbon double bond in an enoyl moiety that is covalently linked to an acyl carrier protein (ACP). This Shewanella denitrificans (strain OS217 / ATCC BAA-1090 / DSM 15013) protein is Enoyl-[acyl-carrier-protein] reductase [NADH].